We begin with the raw amino-acid sequence, 338 residues long: MMAMNAKQPFGMHPVLQEPKFSSLHSGSEAMRRVCLPAPQLQGNIFGSFDESLLARAEALAAVDIVSHGKNHPFKPDATYHTMSSVPCTSTSPTVPISHPAALTSHPHHPVHQGLEGDLLEHISPTLSVSGLGAPEHSVMPAQIHPHHLGAMGHLHQAMGMSHPHAVAPHSAMPACLSDVESDPRELEAFAERFKQRRIKLGVTQADVGAALANLKIPGVGSLSQSTICRFESLTLSHNNMIALKPVLQAWLEEAEAAYREKNSKPELFNGSERKRKRTSIAAPEKRSLEAYFAIQPRPSSEKIAAIAEKLDLKKNVVRVWFCNQRQKQKRMKYSAVH.

The POU-IV box signature appears at 56-65; it reads RAEALAAVDI. The disordered stretch occupies residues 91–112; it reads TSPTVPISHPAALTSHPHHPVH. The region spanning 179–256 is the POU-specific domain; sequence DVESDPRELE…VLQAWLEEAE (78 aa). The homeobox DNA-binding region spans 274–333; that stretch reads RKRKRTSIAAPEKRSLEAYFAIQPRPSSEKIAAIAEKLDLKKNVVRVWFCNQRQKQKRMK.

The protein belongs to the POU transcription factor family. As to quaternary structure, interacts with ISL1. In terms of tissue distribution, expressed in the chochlea of the inner ear.

It is found in the nucleus. The protein resides in the cytoplasm. In terms of biological role, acts as a transcriptional activator. Acts by binding to sequences related to the consensus octamer motif 5'-ATGCAAAT-3' in the regulatory regions of its target genes. Involved in the auditory system development, required for terminal differentiation of hair cells in the inner ear. The chain is POU domain, class 4, transcription factor 3 from Rattus norvegicus (Rat).